A 433-amino-acid chain; its full sequence is GTPase Obg (433 aa).

One can recognise an Obg domain in the interval 1-159 (MAITDYCECR…LNVSLEVKYL (159 aa)). The 170-residue stretch at 160 to 329 (ANVGIVGFPN…LLDRVFELYN (170 aa)) folds into the OBG-type G domain. GTP is bound by residues 166-173 (GFPNSGKS), 191-195 (FTTLI), 212-215 (DIPG), 282-285 (NKID), and 310-312 (ISA). Positions 173 and 193 each coordinate Mg(2+). In terms of domain architecture, OCT spans 355-433 (TNENNNDPLN…FDGCEFVIND (79 aa)).

This sequence belongs to the TRAFAC class OBG-HflX-like GTPase superfamily. OBG GTPase family. Monomer. It depends on Mg(2+) as a cofactor.

Its subcellular location is the cytoplasm. In terms of biological role, an essential GTPase which binds GTP, GDP and possibly (p)ppGpp with moderate affinity, with high nucleotide exchange rates and a fairly low GTP hydrolysis rate. Plays a role in control of the cell cycle, stress response, ribosome biogenesis and in those bacteria that undergo differentiation, in morphogenesis control. In Mycoplasma genitalium (strain ATCC 33530 / DSM 19775 / NCTC 10195 / G37) (Mycoplasmoides genitalium), this protein is GTPase Obg.